Reading from the N-terminus, the 701-residue chain is Elongation factor G 2 (701 aa).

Residues 8–290 enclose the tr-type G domain; sequence ERYRNIGISA…AVIDYLPSPA (283 aa). GTP-binding positions include 17-24, 88-92, and 142-145; these read AHIDAGKT, DTPGH, and NKMD.

Belongs to the TRAFAC class translation factor GTPase superfamily. Classic translation factor GTPase family. EF-G/EF-2 subfamily.

The protein resides in the cytoplasm. Catalyzes the GTP-dependent ribosomal translocation step during translation elongation. During this step, the ribosome changes from the pre-translocational (PRE) to the post-translocational (POST) state as the newly formed A-site-bound peptidyl-tRNA and P-site-bound deacylated tRNA move to the P and E sites, respectively. Catalyzes the coordinated movement of the two tRNA molecules, the mRNA and conformational changes in the ribosome. This chain is Elongation factor G 2, found in Cupriavidus pinatubonensis (strain JMP 134 / LMG 1197) (Cupriavidus necator (strain JMP 134)).